We begin with the raw amino-acid sequence, 248 residues long: UPF0736 protein BCB4264_A1231 (248 aa).

Belongs to the UPF0736 family.

In Bacillus cereus (strain B4264), this protein is UPF0736 protein BCB4264_A1231.